The following is a 265-amino-acid chain: HUWE1-associated protein modifying stress responses (265 aa).

4 disordered regions span residues 1-22, 145-170, 195-218, and 240-265; these read MEDK…HWFS, RNSR…GSSV, VRSS…RRNG, and GTRK…NRMI. Composition is skewed to polar residues over residues 156-170 and 195-212; these read VSPN…GSSV and VRSS…SSNT.

Belongs to the HAPSTR1 family. Oligomer.

The protein localises to the nucleus. The protein resides in the cytoplasm. Its function is as follows. Acts as a central player within a network of stress response pathways promoting cellular adaptability. Functions as a negative regulator of TP53/P53 in the cellular response to telomere erosion and probably also DNA damage. The polypeptide is HUWE1-associated protein modifying stress responses (Xenopus tropicalis (Western clawed frog)).